The sequence spans 198 residues: dTTP/UTP pyrophosphatase (198 aa).

D75 functions as the Proton acceptor in the catalytic mechanism.

Belongs to the Maf family. YhdE subfamily. The cofactor is a divalent metal cation.

The protein localises to the cytoplasm. The enzyme catalyses dTTP + H2O = dTMP + diphosphate + H(+). It catalyses the reaction UTP + H2O = UMP + diphosphate + H(+). Its function is as follows. Nucleoside triphosphate pyrophosphatase that hydrolyzes dTTP and UTP. May have a dual role in cell division arrest and in preventing the incorporation of modified nucleotides into cellular nucleic acids. This Wolbachia sp. subsp. Drosophila simulans (strain wRi) protein is dTTP/UTP pyrophosphatase.